The sequence spans 81 residues: Photosystem I iron-sulfur center (81 aa).

2 4Fe-4S ferredoxin-type domains span residues 2 to 31 and 39 to 68; these read SHAV…MVPW and IASS…IRVY. Residues Cys11, Cys14, Cys17, Cys21, Cys48, Cys51, Cys54, and Cys58 each contribute to the [4Fe-4S] cluster site.

As to quaternary structure, the cyanobacterial PSI reaction center is composed of one copy each of PsaA,B,C,D,E,F,I,J,K,L,M and X, and forms trimeric complexes. Requires [4Fe-4S] cluster as cofactor.

It localises to the cellular thylakoid membrane. It carries out the reaction reduced [plastocyanin] + hnu + oxidized [2Fe-2S]-[ferredoxin] = oxidized [plastocyanin] + reduced [2Fe-2S]-[ferredoxin]. In terms of biological role, apoprotein for the two 4Fe-4S centers FA and FB of photosystem I (PSI); essential for photochemical activity. FB is the terminal electron acceptor of PSI, donating electrons to ferredoxin. The C-terminus interacts with PsaA/B/D and helps assemble the protein into the PSI complex. Required for binding of PsaD and PsaE to PSI. PSI is a plastocyanin/cytochrome c6-ferredoxin oxidoreductase, converting photonic excitation into a charge separation, which transfers an electron from the donor P700 chlorophyll pair to the spectroscopically characterized acceptors A0, A1, FX, FA and FB in turn. The chain is Photosystem I iron-sulfur center from Prochlorococcus marinus (strain MIT 9211).